We begin with the raw amino-acid sequence, 485 residues long: Silicon efflux transporter LSI3 (485 aa).

5 helical membrane passes run 14–34, 37–57, 59–79, 106–126, and 180–200; these read VAFGVFWMLAVFPSVPFLPIG, AGALLGAVLMIVFHVISADDA, ASIDLPILGLLFATMVVGGYL, VCVVTALASALFTNDTCCVVL, and FLLGILPAMLAGMGINMLMLL. Basic and acidic residues predominate over residues 233–242; that stretch reads ALNNNKKDDG. The segment at 233 to 261 is disordered; sequence ALNNNKKDDGDAATPASPEDDDGGDAESM. 5 helical membrane passes run 283 to 303, 336 to 356, 377 to 397, 418 to 438, and 461 to 481; these read LFLKSFAYVVTVGMLVAYMLG, LLVFFSGMFVTVSGFNKTGLP, VLSVIILLLSNLASNVPTVLL, WLLLAWVSTVAGNLSLLGSAA, and HVIFGLPSTLVVTAIGIPLIG.

Belongs to the arsenite-antimonite (ArsB) efflux (TC 2.A.45) family.

The protein localises to the cell membrane. Functionally, silicon efflux transporter involved in silicon transport in shoots. In the nodes, involved with LSI2 and NIP2-2/LSI6 in silicon intervascular transfer, which is required for the preferential distribution of silicon, such as hyperaccumulation of silicon in the husk. Silicon is beneficial to plant growth and helps plants to overcome abiotic and biotic stresses by preventing lodging (falling over) and increasing resistance to pests and diseases, as well as other stresses. The sequence is that of Silicon efflux transporter LSI3 from Oryza sativa subsp. japonica (Rice).